The sequence spans 270 residues: Homeobox protein vent1B (270 aa).

Composition is skewed to basic and acidic residues over residues 17 to 26 (EEAADGKDSM) and 44 to 59 (YAKE…DVQE). Disordered regions lie at residues 17–66 (EEAA…SFQC) and 88–134 (TWGS…LRTA). Polar residues predominate over residues 89–99 (WGSSDEFSSAG). A compositionally biased stretch (basic and acidic residues) spans 116–131 (QDTDHNGKSTKSDRRL). Residues 128–187 (DRRLRTAFSPQQISKLEQAFNKQRYLGASERKKLATSLMLSEIQVKTWFQNRRMKLKRQI) constitute a DNA-binding region (homeobox).

As to expression, expressed in the ventral marginal zone of gastrulae. At the end of gastrulation, predominantly localized to the ventral region of the closing slit blastopore. At early tail bud stage, expression is maintained only in the forming proctodeum.

The protein resides in the nucleus. Its function is as follows. Probable transcription regulator. Acts in a ventral signaling pathway downstream of bmp4 and vent2B. This is Homeobox protein vent1B (vent1B) from Xenopus laevis (African clawed frog).